A 1041-amino-acid polypeptide reads, in one-letter code: Leucine-rich repeat receptor-like protein kinase TDR (1041 aa).

Positions 1-29 (MKKKNISPSLVLHPLLLLLLPFFAFNSLA) are cleaved as a signal peptide. Over 30–652 (LKFSPQLLSL…HHKEERPKKT (623 aa)) the chain is Extracellular. Cysteine 69 and cysteine 76 are joined by a disulfide. Residues asparagine 78, asparagine 92, and asparagine 111 are each glycosylated (N-linked (GlcNAc...) asparagine). 21 LRR repeats span residues 80–104 (TAQV…IRYL), 105–128 (SSLL…IFDL), 130–152 (KLTT…ISKL), 154–176 (FLKV…VSRL), 177–199 (RFLE…AYGG), 200–224 (LQRL…LGLL), 225–248 (TELQ…FALL), 250–272 (NLKY…LGNL), 273–296 (SNLE…YSNL), 297–319 (KSLK…GFST), 321–344 (KNLT…IGEL), 345–368 (PELT…LGSN), 369–392 (GKLE…LCHG), 394–416 (KLYK…LTRC), 418–439 (SLWR…GFGS), 440–464 (LRNL…FATA), 466–488 (VLQY…IWKA), 511–535 (CKSF…IGHC), 536–558 (EKLL…EIST), 559–583 (LPSI…FGSS), and 585–607 (TITT…SFAH). Residues 186 to 188 (GSY) form a CLE peptide binding region. A CLE peptide binding region spans residues 233–235 (GYN). N-linked (GlcNAc...) asparagine glycans are attached at residues asparagine 258 and asparagine 271. Residues 303–307 (DFSSN) are CLE peptide binding. 3 N-linked (GlcNAc...) asparagine glycosylation sites follow: asparagine 322, asparagine 332, and asparagine 356. The CLE peptide binding stretch occupies residues 375–377 (DVS). Asparagine 378 is a glycosylation site (N-linked (GlcNAc...) asparagine). A disulfide bond links cysteine 390 and cysteine 416. The tract at residues 421–423 (RFR) is CLE peptide binding. N-linked (GlcNAc...) asparagine glycans are attached at residues asparagine 430, asparagine 442, asparagine 471, asparagine 525, and asparagine 542. A disulfide bridge connects residues cysteine 511 and cysteine 535. Residue asparagine 590 is glycosylated (N-linked (GlcNAc...) asparagine). Cysteine 620 and cysteine 628 form a disulfide bridge. The helical transmembrane segment at 653–673 (AGAIVWILAAAIGVGFFVLVA) threads the bilayer. At 674-1041 (ATRCFQKSYG…HDVKCQRIGV (368 aa)) the chain is on the cytoplasmic side. Threonine 710 is modified (phosphothreonine). A Protein kinase domain is found at 719–1001 (SKTDNILGMG…DVLLILQEAK (283 aa)). Residues 725 to 733 (LGMGSTGTV) and lysine 747 contribute to the ATP site. Tyrosine 798 and tyrosine 839 each carry phosphotyrosine. The Proton acceptor role is filled by aspartate 852. Position 884 is a phosphoserine (serine 884). Phosphotyrosine is present on residues tyrosine 892 and tyrosine 899. Threonine 900 is modified (phosphothreonine).

It belongs to the protein kinase superfamily. Ser/Thr protein kinase family. As to quaternary structure, interacts specifically with the mature peptides CLE41p and CLE44p, especially in the presence of SERK2. Interacts with LURE1.2. Widely expressed along the vascular strands. In roots and hypocotyls, confined to procambial cells.

The protein localises to the cell membrane. The enzyme catalyses L-seryl-[protein] + ATP = O-phospho-L-seryl-[protein] + ADP + H(+). It carries out the reaction L-threonyl-[protein] + ATP = O-phospho-L-threonyl-[protein] + ADP + H(+). Its function is as follows. Acts with CLE41p and CLE44p peptides as a ligand-receptor pair in a signal transduction pathway involved in the regulation of procambium maintenance and polarity during vascular-tissue development. Mediates repression of tracheary element differentiation and the promotion of procambial cells formation and polar division adjacent to phloem cells in the veins. This Arabidopsis thaliana (Mouse-ear cress) protein is Leucine-rich repeat receptor-like protein kinase TDR.